A 1161-amino-acid polypeptide reads, in one-letter code: Voltage-gated inwardly rectifying potassium channel KCNH2 (1161 aa).

The Cytoplasmic portion of the chain corresponds to 1–405 (MPVRRGHVAP…RIHRWTILHY (405 aa)). The 72-residue stretch at 17-88 (TIIRKFEGQS…AAQIAQALLG (72 aa)) folds into the PAS domain. The PAC domain occupies 92 to 144 (RKVEIAFYRKDGSCFLCLVDVVPVKNEDGAVIMFILNFEVVMEKDMVGSPARD). Residues 233-286 (ALVGSCSPPPPVSAPGPHPSLRAHSLNPDASGSSCSLARTRSRESCASVRRASS) are disordered. 2 positions are modified to phosphoserine: Ser239 and Ser245. Pro residues predominate over residues 239–250 (SPPPPVSAPGPH). Residues 260–271 (PDASGSSCSLAR) show a composition bias toward polar residues. 4 positions are modified to phosphoserine: Ser285, Ser286, Ser322, and Ser353. The chain crosses the membrane as a helical span at residues 406–426 (SPFKAVWDWLILLLVIYTAVF). The Extracellular segment spans residues 427–452 (TPYSAAFLLKETEEGPPAPECGYACQ). Residues 453–473 (PLAVVDLIVDIMFIVDILINF) form a helical membrane-spanning segment. The Cytoplasmic portion of the chain corresponds to 474-497 (RTTYVNANEEVVSHPGRIAVHYFK). A helical transmembrane segment spans residues 498-518 (GWFLIDMVAAIPFDLLIFGSG). Residues 519-522 (SEEL) lie on the Extracellular side of the membrane. Residues 523–543 (IGLLKTARLLRLVRVARKLDR) traverse the membrane as a helical; Voltage-sensor segment. At 544-549 (YSEYGA) the chain is on the cytoplasmic side. A helical transmembrane segment spans residues 550-570 (AVLLLLMCTFALIAHWLACIW). Residues 571–613 (YAIGNMEQPHMDSRIGWLHNLGDQMGKPYNSSGLGGPSIKDKY) lie on the Extracellular side of the membrane. Asn600 carries N-linked (GlcNAc...) asparagine glycosylation. Positions 614–634 (VTGLYFTFSSLTSVGFGNVSP) form an intramembrane region, pore-forming. The Selectivity filter signature appears at 626 to 631 (SVGFGN). Topologically, residues 635 to 640 (NTNSEK) are extracellular. A helical transmembrane segment spans residues 641 to 661 (IFSICVMLIGSLMYASIFGNV). Residues 662–1161 (SAIIQRLYSG…LHRHGSDPGS (500 aa)) are Cytoplasmic-facing. A cNMP-binding domain region spans residues 744 to 844 (PFRGATKDCL…IHRDDLLEVL (101 aa)). The interval 872 to 985 (GSPGSTEWEG…TEDCEKSSDT (114 aa)) is disordered. Ser873 and Ser876 each carry phosphoserine. The segment covering 885–894 (RQRKRKLSFR) has biased composition (basic residues). A compositionally biased stretch (low complexity) spans 930–941 (GESPSSGPSSPE). Pro residues predominate over residues 962 to 972 (SPRPPGEPPGG). Arg1016 is subject to Omega-N-methylarginine. Residues 1037-1064 (RGDVESRLDALQRQLNRLETRLSADMAT) are a coiled coil. Residues 1121 to 1161 (ELPPGAPELPQEGPTRRLSLPGQLGALTSQPLHRHGSDPGS) form a disordered region. A Phosphoserine modification is found at Ser1139.

It belongs to the potassium channel family. H (Eag) (TC 1.A.1.20) subfamily. Kv11.1/KCNH2 sub-subfamily. In terms of assembly, the potassium channel is probably composed of a homo- or heterotetrameric complex of pore-forming alpha subunits that can associate with modulating beta subunits. Interacts with DNAJB12 and DNAJB14; chaperones DNAJB12 and DNAJB14 promote tetramerization. Heteromultimer with KCNH6/ERG2 and KCNH7/ERG3. Interacts with ALG10B. Forms a stable complex with KCNE1 or KCNE2, and that this heteromultimerization regulates Inward rectifier potassium channel activity. Interacts with CANX. The core-glycosylated, but not the fully glycosylated form interacts with RNF207. Interacts with NDFIP1 and NDFIP2; this interaction decreases the cell membrane expression by targeting KCNH2, through interaction with NEDD4L, for the degradation through the multivesicular bodies (MVBs)-lysosomal pathway. Post-translationally, phosphorylated on serine and threonine residues. Phosphorylation by PKA inhibits ion conduction. As to expression, detected in heart, both in atrium and in left ventricle.

Its subcellular location is the cell membrane. The enzyme catalyses K(+)(in) = K(+)(out). In terms of biological role, pore-forming (alpha) subunit of voltage-gated inwardly rectifying potassium channel. Characterized by unusual gating kinetics by producing relatively small outward currents during membrane depolarization and large inward currents during subsequent repolarization which reflect a rapid inactivation during depolarization and quick recovery from inactivation but slow deactivation (closing) during repolarization. Channel properties are modulated by cAMP and subunit assembly. Forms a stable complex with KCNE1 or KCNE2, and that this heteromultimerization regulates inward rectifier potassium channel activity. In Oryctolagus cuniculus (Rabbit), this protein is Voltage-gated inwardly rectifying potassium channel KCNH2.